Reading from the N-terminus, the 137-residue chain is Large ribosomal subunit protein uL16 (137 aa).

Belongs to the universal ribosomal protein uL16 family. In terms of assembly, part of the 50S ribosomal subunit.

Its function is as follows. Binds 23S rRNA and is also seen to make contacts with the A and possibly P site tRNAs. In Legionella pneumophila (strain Paris), this protein is Large ribosomal subunit protein uL16.